Consider the following 816-residue polypeptide: Transducer protein Htr18 (816 aa).

2 consecutive transmembrane segments (helical) span residues 21–41 (VVIV…TQAV) and 282–302 (NIVV…LVIG). Residues 303–356 (RDALTALTDMSDRAEAIAAGDIDTAIEETTRIDEVGDLRRSFRDIQEYLQTVAG) enclose the HAMP 1 domain. The segment at 399–425 (DAQETAEQSRKEAEQSREEAEALAAAL) is disordered. Over residues 405–418 (EQSRKEAEQSREEA) the composition is skewed to basic and acidic residues. The HAMP 2 domain occupies 423–476 (AALESQAQDIRETVEHAADGDLTQRLETDTDHESMAAIATALNSLLEELEGTIH). A Methyl-accepting transducer domain is found at 495–731 (SAEEVKRASG…EVVTMVDEVG (237 aa)). The interval 790 to 816 (GGAENTTGAFVRSASTDHSRDATHHDT) is disordered. Over residues 793-803 (ENTTGAFVRSA) the composition is skewed to polar residues. The span at 804–816 (STDHSRDATHHDT) shows a compositional bias: basic and acidic residues.

It belongs to the methyl-accepting chemotaxis (MCP) protein family. Post-translationally, methylated by CheR.

The protein localises to the cell membrane. Potentially involved in chemo- or phototactic signal transduction. This chain is Transducer protein Htr18 (htr18), found in Halobacterium salinarum (strain ATCC 29341 / DSM 671 / R1).